Reading from the N-terminus, the 657-residue chain is Methionine--tRNA ligase (657 aa).

Residues 13 to 23 (YYPSGNLHIGH) carry the 'HIGH' region motif. A 'KMSKS' region motif is present at residues 308 to 312 (KMSKS). ATP is bound at residue K311. One can recognise a tRNA-binding domain in the interval 557–657 (DFDKVEIKAA…SAIPNGAVIK (101 aa)).

This sequence belongs to the class-I aminoacyl-tRNA synthetase family. MetG type 2B subfamily. In terms of assembly, homodimer.

It is found in the cytoplasm. It carries out the reaction tRNA(Met) + L-methionine + ATP = L-methionyl-tRNA(Met) + AMP + diphosphate. Its function is as follows. Is required not only for elongation of protein synthesis but also for the initiation of all mRNA translation through initiator tRNA(fMet) aminoacylation. This chain is Methionine--tRNA ligase, found in Staphylococcus aureus (strain COL).